A 40-amino-acid chain; its full sequence is Cytochrome b6-f complex subunit 5 (40 aa).

The chain crosses the membrane as a helical span at residues 5–25; the sequence is ILLGMVLGFVPVTIAGLLVAA.

This sequence belongs to the PetG family. As to quaternary structure, the 4 large subunits of the cytochrome b6-f complex are cytochrome b6, subunit IV (17 kDa polypeptide, PetD), cytochrome f and the Rieske protein, while the 4 small subunits are PetG, PetL, PetM and PetN. The complex functions as a dimer.

Its subcellular location is the cell inner membrane. Component of the cytochrome b6-f complex, which mediates electron transfer between photosystem II (PSII) and photosystem I (PSI), cyclic electron flow around PSI, and state transitions. PetG is required for either the stability or assembly of the cytochrome b6-f complex. This Gloeobacter violaceus (strain ATCC 29082 / PCC 7421) protein is Cytochrome b6-f complex subunit 5.